The primary structure comprises 297 residues: Transmembrane protein 178A (297 aa).

Positions 1–25 (MEPRALVTALSLGLSLCSLGLLVTA) are cleaved as a signal peptide. Over 26–179 (IFTDHWYETD…LLHLRRITAG (154 aa)) the chain is Extracellular. Residues 41 to 57 (ESCERSRAGADPPDQKN) show a composition bias toward basic and acidic residues. Residues 41 to 86 (ESCERSRAGADPPDQKNRLMPLSHLPLRDSPPLGRRLLPGGPGRSD) are disordered. Positions 68–79 (RDSPPLGRRLLP) are enriched in low complexity. N158 carries an N-linked (GlcNAc...) asparagine glycan. Residues 180–200 (FLGMAVAVLLCGCIVATVSFF) traverse the membrane as a helical segment. At 201–208 (WEESLTQH) the chain is on the cytoplasmic side. The chain crosses the membrane as a helical span at residues 209-229 (VAGLLFLMTGIFCTISLCTYA). At 230 to 257 (ASVSYDLNRVPKLIYSLPHDVEHGYSWS) the chain is on the extracellular side. Residues 258–278 (IFCAWCSLGFIVAAGGLCIAY) form a helical membrane-spanning segment. The Cytoplasmic segment spans residues 279 to 297 (PFISRTKIAHLKSGRDSTV).

It belongs to the TMEM178 family. As to quaternary structure, interacts with STIM1. As to expression, highly expressed in the bone and its expression increases during osteoclastogenesis.

Its subcellular location is the endoplasmic reticulum membrane. Its function is as follows. Acts as a negative regulator of osteoclast differentiation in basal and inflammatory conditions by regulating TNFSF11-induced Ca (2+) fluxes, thereby controlling the induction of NFATC1. This Mus musculus (Mouse) protein is Transmembrane protein 178A (Tmem178a).